A 91-amino-acid polypeptide reads, in one-letter code: MVATNRCCVFALLFALLLVHSLTEAGKGKEILGKIKEKIIEAKDKMKAGWERLTSQSEYACPAIDKFCEDHCAAKKAVGKCDDFKCKCIKL.

An N-terminal signal peptide occupies residues 1 to 25 (MVATNRCCVFALLFALLLVHSLTEA). The propeptide occupies 26 to 42 (GKGKEILGKIKEKIIEA). A BetaSPN-type CS-alpha/beta domain is found at 58–91 (EYACPAIDKFCEDHCAAKKAVGKCDDFKCKCIKL). 3 cysteine pairs are disulfide-bonded: cysteine 61-cysteine 81, cysteine 68-cysteine 86, and cysteine 72-cysteine 88.

Belongs to the long chain scorpion toxin family. Class 2 subfamily. Expressed by the venom gland.

The protein localises to the secreted. The full peptide presents antibacterial and cytotoxic activities. The synthetic C-terminus (AA 33-76) inhibits voltage-gated potassium channels Kv1.1/KCNA1, Kv1.2/KCNA2, and Kv1.3/KCNA3. This is Potassium channel toxin TstKMK from Tityus stigmurus (Brazilian scorpion).